A 521-amino-acid chain; its full sequence is DNA damage-binding protein cmr1 (521 aa).

Residues 36–75 are disordered; it reads DKIIPKPAPPKPKRASTPRVKREPVKKEAARPTRQSSRLA. Over residues 55-66 the composition is skewed to basic and acidic residues; sequence VKREPVKKEAAR. WD repeat units follow at residues 183–224, 242–282, 333–373, 382–422, and 490–521; these read IVPQ…PKIE, THSR…STEI, LTDH…GKGD, EHES…EWKA, and DGIT…CLWM.

Belongs to the WD repeat DDB2/WDR76 family.

Functionally, DNA-binding protein that binds to both single- and double-stranded DNA. Binds preferentially to UV-damaged DNA. May be involved in DNA-metabolic processes. The sequence is that of DNA damage-binding protein cmr1 from Neurospora crassa (strain ATCC 24698 / 74-OR23-1A / CBS 708.71 / DSM 1257 / FGSC 987).